Here is a 350-residue protein sequence, read N- to C-terminus: Putative deoxyribonuclease-2 (350 aa).

Belongs to the DNase II family.

In Burkholderia thailandensis (strain ATCC 700388 / DSM 13276 / CCUG 48851 / CIP 106301 / E264), this protein is Putative deoxyribonuclease-2.